The following is a 124-amino-acid chain: Translation initiation factor 5A (124 aa).

The disordered stretch occupies residues 27-53; it reads TSYSTSKPGKHGSAKARVEGTGVFDGQ. The residue at position 36 (Lys36) is a Hypusine.

This sequence belongs to the eIF-5A family.

The protein resides in the cytoplasm. In terms of biological role, functions by promoting the formation of the first peptide bond. This chain is Translation initiation factor 5A, found in Natronomonas pharaonis (strain ATCC 35678 / DSM 2160 / CIP 103997 / JCM 8858 / NBRC 14720 / NCIMB 2260 / Gabara) (Halobacterium pharaonis).